Here is a 67-residue protein sequence, read N- to C-terminus: Photosystem II reaction center protein H (67 aa).

The chain crosses the membrane as a helical span at residues 27-47 (GAVPVMAFVGVLLLVFLVILL).

Belongs to the PsbH family. PSII is composed of 1 copy each of membrane proteins PsbA, PsbB, PsbC, PsbD, PsbE, PsbF, PsbH, PsbI, PsbJ, PsbK, PsbL, PsbM, PsbT, PsbX, PsbY, Psb30/Ycf12, peripheral proteins PsbO, CyanoQ (PsbQ), PsbU, PsbV and a large number of cofactors. It forms dimeric complexes.

The protein resides in the cellular thylakoid membrane. In terms of biological role, one of the components of the core complex of photosystem II (PSII), required for its stability and/or assembly. PSII is a light-driven water:plastoquinone oxidoreductase that uses light energy to abstract electrons from H(2)O, generating O(2) and a proton gradient subsequently used for ATP formation. It consists of a core antenna complex that captures photons, and an electron transfer chain that converts photonic excitation into a charge separation. This Prochlorococcus marinus (strain SARG / CCMP1375 / SS120) protein is Photosystem II reaction center protein H.